Here is a 78-residue protein sequence, read N- to C-terminus: Structural DNA-binding protein p10 (78 aa).

Over residues Met1 to Gly27 the composition is skewed to low complexity. The segment at Met1–Gly41 is disordered.

Belongs to the asfivirus P10 family.

Its subcellular location is the virion. Its function is as follows. May play a role in genome packaging through direct interaction with viral DNA. Binds to ssDNA and dsDNA with the same apparent affinity in vitro. The polypeptide is Structural DNA-binding protein p10 (African swine fever virus (strain Badajoz 1971 Vero-adapted) (Ba71V)).